The sequence spans 458 residues: Dihydrolipoyl dehydrogenase (458 aa).

FAD-binding positions include 30–38 (DKGKLGGTC), Lys-47, and Ala-112. A disulfide bridge links Cys-38 with Cys-43. NAD(+) is bound by residues 177–181 (GGGVI), Glu-200, and 263–266 (AIGR). FAD contacts are provided by Asp-305 and Ala-313. His-437 acts as the Proton acceptor in catalysis.

This sequence belongs to the class-I pyridine nucleotide-disulfide oxidoreductase family. Homodimer. The cofactor is FAD.

Its subcellular location is the cytoplasm. The enzyme catalyses N(6)-[(R)-dihydrolipoyl]-L-lysyl-[protein] + NAD(+) = N(6)-[(R)-lipoyl]-L-lysyl-[protein] + NADH + H(+). Its pathway is ketone degradation; acetoin degradation. In Bacillus subtilis (strain 168), this protein is Dihydrolipoyl dehydrogenase (acoL).